The primary structure comprises 90 residues: Small ribosomal subunit protein uS15 (90 aa).

Belongs to the universal ribosomal protein uS15 family. In terms of assembly, part of the 30S ribosomal subunit. Forms a bridge to the 50S subunit in the 70S ribosome, contacting the 23S rRNA.

In terms of biological role, one of the primary rRNA binding proteins, it binds directly to 16S rRNA where it helps nucleate assembly of the platform of the 30S subunit by binding and bridging several RNA helices of the 16S rRNA. Functionally, forms an intersubunit bridge (bridge B4) with the 23S rRNA of the 50S subunit in the ribosome. This chain is Small ribosomal subunit protein uS15, found in Helicobacter acinonychis (strain Sheeba).